A 183-amino-acid chain; its full sequence is Translocon-associated protein subunit beta (183 aa).

A signal peptide spans 1–17; the sequence is MRLLASVLLALFAVSHA. Residues 18-149 are Lumenal-facing; that stretch reads EEGARLLASK…DRRFSPHFLD (132 aa). Asn88 and Asn104 each carry an N-linked (GlcNAc...) asparagine glycan. A helical transmembrane segment spans residues 150–169; it reads WAAFGVMTLPSIGIPLLLWY. The Cytoplasmic portion of the chain corresponds to 170-183; that stretch reads SSKRKYDTPKSKKN.

It belongs to the TRAP-beta family. As to quaternary structure, heterotetramer of TRAP-alpha, TRAP-beta, TRAP-delta and TRAP-gamma. Interacts with STING1.

It is found in the endoplasmic reticulum membrane. Functionally, TRAP proteins are part of a complex whose function is to bind calcium to the ER membrane and thereby regulate the retention of ER resident proteins. The sequence is that of Translocon-associated protein subunit beta (SSR2) from Canis lupus familiaris (Dog).